The following is a 446-amino-acid chain: MTVDAPELLEKLRITDAGANGADMSSSTSAAANGTGKEVDDGSDDDGTENPPAVAAEHSTAKKKKNKKRKPKKKQPKVQTDPPSIPLSQLFPNNSYPKGEEVEYKDENRYRTTSEEKRHLDNLNSDFLSDYRQAAEAHRQVRQWAQRNIKPGQTLLEIANGIEESARCLVGHDGLTEGDSLIAGMGFPTGLNIDNIVAHYSPNAGCKTVLAQNNVLKVDIGIHVGGRIVDSAFTMAFDPMYDNLLAAVKDATNTGVREAGIDVRVGELGGYIQEAMESYECEIRGKTYPIKAIRNLCGHTILPYSIHGTKNVPFVKSNDMTKMEEGDVFAIETFGSTGSGRYVEGGEVSHYALRGDADRKDLTLSSARSLLTAIKKNFSTIPFCRRYLDRIGQEKYLLGLNYLVKSGIVEDYPPLNEKPGTYTAQFEHTILLRPTVKEVISRGDDY.

A disordered region spans residues 14-116 (ITDAGANGAD…ENRYRTTSEE (103 aa)). A compositionally biased stretch (basic residues) spans 61–76 (AKKKKNKKRKPKKKQP). Residues 86 to 96 (PLSQLFPNNSY) show a composition bias toward polar residues. The segment covering 98–116 (KGEEVEYKDENRYRTTSEE) has biased composition (basic and acidic residues). His199 is a substrate binding site. Asp219, Asp230, and His299 together coordinate a divalent metal cation. His307 lines the substrate pocket. A divalent metal cation contacts are provided by Glu332 and Glu427.

The protein belongs to the peptidase M24A family. Methionine aminopeptidase eukaryotic type 2 subfamily. Co(2+) is required as a cofactor. It depends on Zn(2+) as a cofactor. The cofactor is Mn(2+). Requires Fe(2+) as cofactor.

It localises to the cytoplasm. The catalysed reaction is Release of N-terminal amino acids, preferentially methionine, from peptides and arylamides.. Its function is as follows. Cotranslationally removes the N-terminal methionine from nascent proteins. The N-terminal methionine is often cleaved when the second residue in the primary sequence is small and uncharged (Met-Ala-, Cys, Gly, Pro, Ser, Thr, or Val). The sequence is that of Methionine aminopeptidase 2-3 from Aspergillus fumigatus (strain CBS 144.89 / FGSC A1163 / CEA10) (Neosartorya fumigata).